The sequence spans 489 residues: FAD-containing monooxygenase EthA (489 aa).

FAD is bound by residues S15, E36, 44-47 (TWDL), D56, and V104. 54 to 56 (RSD) lines the NADP(+) pocket. Residues 183 to 189 (SGATAVT) and 207 to 208 (RS) contribute to the NADP(+) site.

The protein belongs to the FAD-binding monooxygenase family. FAD is required as a cofactor.

It is found in the cell membrane. It catalyses the reaction ethionamide + NADPH + O2 + H(+) = ethionamide S-oxide + NADP(+) + H2O. Functionally, monooxygenase able to convert a wide range of ketones to the corresponding esters or lactones via a Baeyer-Villiger oxidation reaction. Can act on long-chain aliphatic ketones (2-hexanone to 2-dodecanone) and on aromatic ketones (phenylacetone and benzylacetone). Is also able to catalyze enantioselective sulfoxidation of methyl-p-tolylsulfide. In vivo, likely functions as a BVMO, but the exact nature of the physiological substrate(s) remains to be established. Is responsible for the activation of several thiocarbamide-containing pro-drugs, such as ethionamide (ETH), isoxyl (ISO) and thiacetazone (TAC), into reactive species. This is FAD-containing monooxygenase EthA (ethA) from Mycobacterium bovis (strain ATCC BAA-935 / AF2122/97).